The sequence spans 60 residues: Phycobilisome degradation protein NblA homolog 2 (60 aa).

It to Synechococcus PCC 7942 NblA and some, to chloroplast ycf18.

The protein is Phycobilisome degradation protein NblA homolog 2 of Synechocystis sp. (strain ATCC 27184 / PCC 6803 / Kazusa).